The sequence spans 123 residues: UPF0102 protein Mflv_4140 (123 aa).

It belongs to the UPF0102 family.

This chain is UPF0102 protein Mflv_4140, found in Mycolicibacterium gilvum (strain PYR-GCK) (Mycobacterium gilvum (strain PYR-GCK)).